The chain runs to 94 residues: PTS system galactitol-specific EIIB component (94 aa).

The PTS EIIB type-2 domain maps to 1–94 (MKRKIIVACG…QNKILTILQG (94 aa)). Catalysis depends on cysteine 9, which acts as the Phosphocysteine intermediate; for EIIB activity. Cysteine 9 bears the Phosphocysteine; by EIIA mark.

In terms of assembly, forms a complex with one each of subunit of GatA, GatB and 2 subunits of GatC.

It is found in the cytoplasm. The catalysed reaction is galactitol(out) + N(pros)-phospho-L-histidyl-[protein] = galactitol 1-phosphate(in) + L-histidyl-[protein]. The phosphoenolpyruvate-dependent sugar phosphotransferase system (PTS), a major carbohydrate active transport system, catalyzes the phosphorylation of incoming sugar substrates concomitant with their translocation across the cell membrane. The enzyme II complex composed of GatA, GatB and GatC is involved in galactitol transport. In Escherichia coli O157:H7, this protein is PTS system galactitol-specific EIIB component (gatB).